Here is a 261-residue protein sequence, read N- to C-terminus: Small ribosomal subunit protein mS23 (261 aa).

Residues 234 to 261 (NPSESWATDEKDPKKNDDIEEDVEEIKL) form a disordered region. Basic and acidic residues predominate over residues 241 to 250 (TDEKDPKKND). A compositionally biased stretch (acidic residues) spans 251-261 (DIEEDVEEIKL).

Belongs to the mitochondrion-specific ribosomal protein mS23 family. In terms of assembly, component of the mitochondrial small ribosomal subunit.

Its subcellular location is the mitochondrion. This is Small ribosomal subunit protein mS23 (RSM25) from Vanderwaltozyma polyspora (strain ATCC 22028 / DSM 70294 / BCRC 21397 / CBS 2163 / NBRC 10782 / NRRL Y-8283 / UCD 57-17) (Kluyveromyces polysporus).